Reading from the N-terminus, the 292-residue chain is F-box/LRR-repeat protein 15 (292 aa).

The F-box domain maps to 12 to 59 (LLDLPWEDVLVTHIFCYLPLRQLVRLQRVSKQFYALIQVYLANCRTFD). 5 LRR repeats span residues 134–155 (HLQY…RSLA), 160–181 (GLRS…CYLS), 186–207 (KMRS…EEVA), 212–233 (ELEQ…RTVA), and 238–259 (KLQS…DPLR).

The protein belongs to the FBXL15 family. Part of the SCF (SKP1-CUL1-F-box) E3 ubiquitin-protein ligase complex SCF(FBXL15).

Its subcellular location is the cytoplasm. Its pathway is protein modification; protein ubiquitination. In terms of biological role, substrate recognition component of a SCF (SKP1-CUL1-F-box protein) E3 ubiquitin-protein ligase complex which mediates the ubiquitination and subsequent proteasomal degradation of target proteins. Acts as a positive regulator of the BMP signaling pathway. Required for dorsal/ventral pattern formation. This chain is F-box/LRR-repeat protein 15 (fbxl15), found in Salmo salar (Atlantic salmon).